The sequence spans 322 residues: tRNA-dihydrouridine synthase B (322 aa).

FMN is bound by residues 16 to 18 and Q70; that span reads PMA. Residue C100 is the Proton donor of the active site. FMN is bound by residues K139, 200–202, and 224–225; these read NGD and GR.

The protein belongs to the Dus family. DusB subfamily. FMN is required as a cofactor.

It catalyses the reaction a 5,6-dihydrouridine in tRNA + NAD(+) = a uridine in tRNA + NADH + H(+). The catalysed reaction is a 5,6-dihydrouridine in tRNA + NADP(+) = a uridine in tRNA + NADPH + H(+). Catalyzes the synthesis of 5,6-dihydrouridine (D), a modified base found in the D-loop of most tRNAs, via the reduction of the C5-C6 double bond in target uridines. The chain is tRNA-dihydrouridine synthase B from Vibrio vulnificus (strain CMCP6).